The sequence spans 99 residues: Small ribosomal subunit protein bS16 (99 aa).

Residues 80–99 (PPRQQNEAKRETAETAQPEA) form a disordered region.

It belongs to the bacterial ribosomal protein bS16 family.

The sequence is that of Small ribosomal subunit protein bS16 from Thermomicrobium roseum (strain ATCC 27502 / DSM 5159 / P-2).